A 342-amino-acid chain; its full sequence is Transmembrane protein 115 homolog (342 aa).

Residues 1-21 are Cytoplasmic-facing; that stretch reads MQYSSRFLELNIPDSFLNINK. Residues 22–42 traverse the membrane as a helical segment; it reads IPDATKFITVTYICLTATLFC. The Lumenal segment spans residues 43-121; the sequence is IRRSLYNKLV…NWNSSKEMFK (79 aa). Asn-114 is a glycosylation site (N-linked (GlcNAc...) asparagine). Residues 122–142 form a helical membrane-spanning segment; that stretch reads FIIVLGSLTNVLIIMLTLLVS. The Cytoplasmic segment spans residues 143 to 159; that stretch reads FFSNKVRLDIPLDGNYT. Residues 160 to 180 traverse the membrane as a helical segment; that stretch reads ILIGFPIIYRQLLPETTIIHL. The Lumenal portion of the chain corresponds to 181-207; that stretch reads KTPQFLAKNFRFKLLPIFVMFTMTVTQ. The helical transmembrane segment at 208 to 228 threads the bilayer; that stretch reads IIWFHHFAQLFSIWVTFFASW. The Cytoplasmic segment spans residues 229–342; that stretch reads SYLRFFQKLA…QVLEERMVNP (114 aa).

This sequence belongs to the TMEM115 family. As to quaternary structure, homooligomer.

Its subcellular location is the golgi apparatus membrane. Its function is as follows. May play a role in retrograde transport of proteins from the Golgi to the endoplasmic reticulum. The protein is Transmembrane protein 115 homolog of Saccharomyces cerevisiae (strain ATCC 204508 / S288c) (Baker's yeast).